Reading from the N-terminus, the 211-residue chain is Small ribosomal subunit protein uS5 (211 aa).

One can recognise an S5 DRBM domain in the interval 58-121 (FEERIVKLKR…KKAHNSIHTV (64 aa)).

It belongs to the universal ribosomal protein uS5 family. As to quaternary structure, part of the 30S ribosomal subunit. Contacts proteins S4 and S8.

With S4 and S12 plays an important role in translational accuracy. Functionally, located at the back of the 30S subunit body where it stabilizes the conformation of the head with respect to the body. The sequence is that of Small ribosomal subunit protein uS5 from Mycoplasma genitalium (strain ATCC 33530 / DSM 19775 / NCTC 10195 / G37) (Mycoplasmoides genitalium).